The chain runs to 286 residues: Polyamine aminopropyltransferase (286 aa).

Residues 5 to 242 (DNWFTEVLEE…GWWSATLASK (238 aa)) form the PABS domain. Position 35 (Gln35) interacts with S-methyl-5'-thioadenosine. Spermidine is bound by residues His66 and Asp90. S-methyl-5'-thioadenosine contacts are provided by residues Asp110 and 141 to 142 (DG). The active-site Proton acceptor is Asp160. 160–163 (DSTD) contributes to the spermidine binding site.

The protein belongs to the spermidine/spermine synthase family. As to quaternary structure, homodimer or homotetramer.

Its subcellular location is the cytoplasm. It carries out the reaction S-adenosyl 3-(methylsulfanyl)propylamine + putrescine = S-methyl-5'-thioadenosine + spermidine + H(+). It functions in the pathway amine and polyamine biosynthesis; spermidine biosynthesis; spermidine from putrescine: step 1/1. In terms of biological role, catalyzes the irreversible transfer of a propylamine group from the amino donor S-adenosylmethioninamine (decarboxy-AdoMet) to putrescine (1,4-diaminobutane) to yield spermidine. The chain is Polyamine aminopropyltransferase from Alkalilimnicola ehrlichii (strain ATCC BAA-1101 / DSM 17681 / MLHE-1).